The following is a 92-amino-acid chain: YcgL domain-containing protein PBPRA1080 (92 aa).

In terms of domain architecture, YcgL spans methionine 1–lysine 84.

This chain is YcgL domain-containing protein PBPRA1080, found in Photobacterium profundum (strain SS9).